The primary structure comprises 146 residues: Hemoglobin subunit beta (146 aa).

V1 bears the N-acetylvaline mark. In terms of domain architecture, Globin spans 2–146; that stretch reads HLTAEEKSAV…VANALAHKYH (145 aa). T12 carries the phosphothreonine modification. S44 bears the Phosphoserine mark. Position 59 is an N6-acetyllysine (K59). H63 is a heme b binding site. K82 carries the post-translational modification N6-acetyllysine. H92 is a heme b binding site. C93 carries the post-translational modification S-nitrosocysteine. At K144 the chain carries N6-acetyllysine.

The protein belongs to the globin family. As to quaternary structure, heterotetramer of two alpha chains and two beta chains. In terms of tissue distribution, red blood cells.

Functionally, involved in oxygen transport from the lung to the various peripheral tissues. This is Hemoglobin subunit beta (HBB) from Leptonychotes weddellii (Weddell seal).